The following is a 122-amino-acid chain: Large ribosomal subunit protein uL14 (122 aa).

This sequence belongs to the universal ribosomal protein uL14 family. In terms of assembly, part of the 50S ribosomal subunit. Forms a cluster with proteins L3 and L19. In the 70S ribosome, L14 and L19 interact and together make contacts with the 16S rRNA in bridges B5 and B8.

Binds to 23S rRNA. Forms part of two intersubunit bridges in the 70S ribosome. The protein is Large ribosomal subunit protein uL14 of Agathobacter rectalis (strain ATCC 33656 / DSM 3377 / JCM 17463 / KCTC 5835 / VPI 0990) (Eubacterium rectale).